The primary structure comprises 333 residues: Adenosine deaminase (333 aa).

Zn(2+) is bound by residues His-12 and His-14. 3 residues coordinate substrate: His-14, Asp-16, and Gly-170. His-197 lines the Zn(2+) pocket. Glu-200 functions as the Proton donor in the catalytic mechanism. Asp-278 provides a ligand contact to Zn(2+). Position 279 (Asp-279) interacts with substrate.

Belongs to the metallo-dependent hydrolases superfamily. Adenosine and AMP deaminases family. Adenosine deaminase subfamily. The cofactor is Zn(2+).

It carries out the reaction adenosine + H2O + H(+) = inosine + NH4(+). It catalyses the reaction 2'-deoxyadenosine + H2O + H(+) = 2'-deoxyinosine + NH4(+). Functionally, catalyzes the hydrolytic deamination of adenosine and 2-deoxyadenosine. This Proteus mirabilis (strain HI4320) protein is Adenosine deaminase.